The following is a 56-amino-acid chain: UPF0391 membrane protein HCH_04387 (56 aa).

2 consecutive transmembrane segments (helical) span residues 6–26 (IVFF…IAAA) and 30–50 (IAQI…IAGG).

It belongs to the UPF0391 family.

The protein localises to the cell membrane. The chain is UPF0391 membrane protein HCH_04387 from Hahella chejuensis (strain KCTC 2396).